The sequence spans 365 residues: Solute carrier family 35 member G1 (365 aa).

A disordered region spans residues 1 to 33 (MRPQDSTGVAELQEPGLPLTDDAPPGATEEPAA). Low complexity predominate over residues 23–33 (APPGATEEPAA). Helical transmembrane passes span 69–89 (GLGL…SLFV), 97–117 (AVEI…PCLI), 131–151 (IFLI…YYAY), 156–176 (LADA…FAWI), 187–207 (ALFT…PFLF), 222–242 (LKGT…LVIL), 252–272 (FLSI…ILSV), 286–306 (LFLI…TKAL), 311–333 (AGPV…IIFF), and 338–357 (TWWT…GAAI). 2 consecutive EamA domains span residues 80–202 (FLFS…LIVR) and 233–357 (VFAA…GAAI).

This sequence belongs to the TMEM20 family. Interacts with STIM1; stimulated by depletion of intracellular calcium. Interacts with ORAI1. Interacts with the plasma membrane calcium-transporting ATPases ATP2B1 and ATP2B4. Interacts with ATP1A1, ATP2A2, KPNB1 and XPO1. Ubiquitously expressed.

The protein localises to the cell membrane. Its subcellular location is the endoplasmic reticulum membrane. Its function is as follows. May play a role in intracellular calcium sensing and homeostasis. May act as a negative regulator of plasma membrane calcium-transporting ATPases preventing calcium efflux from the cell. The protein is Solute carrier family 35 member G1 (SLC35G1) of Homo sapiens (Human).